The following is a 349-amino-acid chain: Desmethyl-yatein O-methyltransferase (349 aa).

The S-adenosyl-L-homocysteine site is built by Gly-193, Asp-216, Asp-236, Met-237, Met-249, and Lys-250. Residue His-254 is the Proton acceptor of the active site. Residues Glu-282 and Glu-314 contribute to the active site.

Belongs to the class I-like SAM-binding methyltransferase superfamily. Cation-independent O-methyltransferase family. COMT subfamily. In terms of assembly, homodimer. In terms of tissue distribution, mostly expressed in stems, and, to a lower extent, in leaves.

It catalyses the reaction (-)-5'-demethylyatein + S-adenosyl-L-methionine = (-)-yatein + S-adenosyl-L-homocysteine + H(+). The protein operates within aromatic compound metabolism; phenylpropanoid biosynthesis. O-methyltransferase involved in the biosynthesis of etoposide, a chemotherapeutic compound of the topoisomerase inhibitor family. Catalyzes the methylation of (-)-5'-demethylyatein to produce (-)-yatein. This Sinopodophyllum hexandrum (Himalayan may apple) protein is Desmethyl-yatein O-methyltransferase.